Consider the following 122-residue polypeptide: Large ribosomal subunit protein uL18 (122 aa).

The tract at residues 1–27 (MSNLSRKQQTQKRHRRLRRHLNGTAQR) is disordered. Over residues 9 to 21 (QTQKRHRRLRRHL) the composition is skewed to basic residues.

The protein belongs to the universal ribosomal protein uL18 family. As to quaternary structure, part of the 50S ribosomal subunit; part of the 5S rRNA/L5/L18/L25 subcomplex. Contacts the 5S and 23S rRNAs.

This is one of the proteins that bind and probably mediate the attachment of the 5S RNA into the large ribosomal subunit, where it forms part of the central protuberance. This chain is Large ribosomal subunit protein uL18, found in Prochlorococcus marinus (strain MIT 9303).